The primary structure comprises 973 residues: Isoleucine--tRNA ligase, mitochondrial (973 aa).

Positions 87 to 97 match the 'HIGH' region motif; it reads PFANGRLHIGH. The 'KMSKS' region signature appears at 625–629; that stretch reads KQSKS. ATP is bound at residue Lys-628.

This sequence belongs to the class-I aminoacyl-tRNA synthetase family.

It localises to the cytoplasm. Its subcellular location is the mitochondrion matrix. The enzyme catalyses tRNA(Ile) + L-isoleucine + ATP = L-isoleucyl-tRNA(Ile) + AMP + diphosphate. The sequence is that of Isoleucine--tRNA ligase, mitochondrial (ism1) from Schizosaccharomyces pombe (strain 972 / ATCC 24843) (Fission yeast).